A 612-amino-acid polypeptide reads, in one-letter code: Dihydroxy-acid dehydratase (612 aa).

Asp81 lines the Mg(2+) pocket. Position 122 (Cys122) interacts with [2Fe-2S] cluster. Asp123 and Lys124 together coordinate Mg(2+). Lys124 carries the post-translational modification N6-carboxylysine. Cys193 contributes to the [2Fe-2S] cluster binding site. Glu489 provides a ligand contact to Mg(2+). Ser515 functions as the Proton acceptor in the catalytic mechanism.

Belongs to the IlvD/Edd family. As to quaternary structure, homodimer. It depends on [2Fe-2S] cluster as a cofactor. Mg(2+) serves as cofactor.

It carries out the reaction (2R)-2,3-dihydroxy-3-methylbutanoate = 3-methyl-2-oxobutanoate + H2O. It catalyses the reaction (2R,3R)-2,3-dihydroxy-3-methylpentanoate = (S)-3-methyl-2-oxopentanoate + H2O. It participates in amino-acid biosynthesis; L-isoleucine biosynthesis; L-isoleucine from 2-oxobutanoate: step 3/4. Its pathway is amino-acid biosynthesis; L-valine biosynthesis; L-valine from pyruvate: step 3/4. Functions in the biosynthesis of branched-chain amino acids. Catalyzes the dehydration of (2R,3R)-2,3-dihydroxy-3-methylpentanoate (2,3-dihydroxy-3-methylvalerate) into 2-oxo-3-methylpentanoate (2-oxo-3-methylvalerate) and of (2R)-2,3-dihydroxy-3-methylbutanoate (2,3-dihydroxyisovalerate) into 2-oxo-3-methylbutanoate (2-oxoisovalerate), the penultimate precursor to L-isoleucine and L-valine, respectively. The sequence is that of Dihydroxy-acid dehydratase from Xanthomonas euvesicatoria pv. vesicatoria (strain 85-10) (Xanthomonas campestris pv. vesicatoria).